The sequence spans 108 residues: MEEILIVTTNEVAGYRITEVYGEVFGLTTRSRNLFSSAGQQMKTVVGGEINGYTKLQHETRETSIDRMREEAKAKGANAIVAMRFDSSTFQNIDSVAAYGTAVKIEKI.

The protein belongs to the UPF0145 family.

The protein is UPF0145 protein YjfJ (yjfJ) of Lactococcus lactis subsp. lactis (strain IL1403) (Streptococcus lactis).